Consider the following 320-residue polypeptide: Membrane protein insertase YidC 2 (320 aa).

The first 23 residues, 1–23 (MKNLKKKLTLTGLMTAGLLFLSG), serve as a signal peptide directing secretion. Cys24 carries N-palmitoyl cysteine lipidation. Cys24 carries the S-diacylglycerol cysteine lipid modification. Transmembrane regions (helical) follow at residues 68 to 88 (YGWG…PLGL), 142 to 162 (MLSS…IALY), 178 to 198 (GIPL…LYFI), 217 to 237 (AMLI…PAGV), and 239 to 259 (LYWA…TFIM). A disordered region spans residues 270-320 (EFTKNPPKINNEGLKDVTPTSVQENFKEITSERNEKERKSGGRNAGKQNRK). A compositionally biased stretch (basic and acidic residues) spans 294 to 309 (NFKEITSERNEKERKS).

The protein belongs to the OXA1/ALB3/YidC family. Type 2 subfamily.

The protein resides in the cell membrane. Functionally, required for the insertion and/or proper folding and/or complex formation of integral membrane proteins into the membrane. Involved in integration of membrane proteins that insert both dependently and independently of the Sec translocase complex, as well as at least some lipoproteins. This Lactococcus lactis subsp. lactis (strain IL1403) (Streptococcus lactis) protein is Membrane protein insertase YidC 2.